Consider the following 302-residue polypeptide: HTH-type transcriptional regulator ArgP (302 aa).

In terms of domain architecture, HTH lysR-type spans 4–60 (PDYRTLQALDAVIRERGFERAAQKLCITQSAVSQRIKQLENLFGQPLLVRTVPPRPT). Residues 21–40 (FERAAQKLCITQSAVSQRIK) constitute a DNA-binding region (H-T-H motif).

Belongs to the LysR transcriptional regulatory family. As to quaternary structure, homodimer.

Its function is as follows. Controls the transcription of genes involved in arginine and lysine metabolism. This chain is HTH-type transcriptional regulator ArgP, found in Yersinia pseudotuberculosis serotype O:1b (strain IP 31758).